Consider the following 209-residue polypeptide: RNA chaperone ProQ (209 aa).

The disordered stretch occupies residues 101–155 (LAESKAKVQARRKEQAQKAREEGKAKAKPAANKKPQQPRRTNKPKVQKPTKPVET). Positions 111–125 (RRKEQAQKAREEGKA) are enriched in basic and acidic residues. Positions 136 to 148 (QQPRRTNKPKVQK) are enriched in basic residues.

This sequence belongs to the ProQ family.

The protein resides in the cytoplasm. Functionally, RNA chaperone with significant RNA binding, RNA strand exchange and RNA duplexing activities. The protein is RNA chaperone ProQ of Vibrio parahaemolyticus serotype O3:K6 (strain RIMD 2210633).